The following is a 697-amino-acid chain: PHD finger protein At1g33420 (697 aa).

Residues 603–653 form a PHD-type zinc finger; the sequence is KVDCKCGTKDDDGERMLACDGCGVWHHTRCIGINNADALPSKFLCFRCIEL.

Its subcellular location is the nucleus. The chain is PHD finger protein At1g33420 from Arabidopsis thaliana (Mouse-ear cress).